Reading from the N-terminus, the 256-residue chain is Protein CUSTOS (256 aa).

Positions M1 to S19 are enriched in low complexity. Disordered stretches follow at residues M1–F83, F127–R163, and I227–N256. The residue at position 62 (S62) is a Phosphoserine. Basic and acidic residues predominate over residues R63–F83. Position 80 is a phosphothreonine (T80). Phosphoserine is present on S139. Residues Q228–A235 carry the Nucleolar localization signal (NLS) motif. Positions Q228–K237 are enriched in basic residues. The segment covering P246–N256 has biased composition (low complexity).

This sequence belongs to the CUSTOS family.

It is found in the nucleus envelope. Plays a role in the regulation of Wnt signaling pathway during early development. This chain is Protein CUSTOS, found in Mus musculus (Mouse).